Consider the following 288-residue polypeptide: Bifunctional protein FolD (288 aa).

Residues 166–168 (GAS) and isoleucine 232 each bind NADP(+).

Belongs to the tetrahydrofolate dehydrogenase/cyclohydrolase family. Homodimer.

It carries out the reaction (6R)-5,10-methylene-5,6,7,8-tetrahydrofolate + NADP(+) = (6R)-5,10-methenyltetrahydrofolate + NADPH. The catalysed reaction is (6R)-5,10-methenyltetrahydrofolate + H2O = (6R)-10-formyltetrahydrofolate + H(+). It functions in the pathway one-carbon metabolism; tetrahydrofolate interconversion. Its function is as follows. Catalyzes the oxidation of 5,10-methylenetetrahydrofolate to 5,10-methenyltetrahydrofolate and then the hydrolysis of 5,10-methenyltetrahydrofolate to 10-formyltetrahydrofolate. The polypeptide is Bifunctional protein FolD (Cronobacter sakazakii (strain ATCC BAA-894) (Enterobacter sakazakii)).